The primary structure comprises 529 residues: Delayed-rectifier potassium channel regulatory subunit KCNS1 (529 aa).

Topologically, residues 1–217 (MLMLLVRGTH…LTMENPGYSL (217 aa)) are cytoplasmic. The chain crosses the membrane as a helical span at residues 218–239 (PSKLFSCVSIGVVLASIAAMCI). Residues 240–270 (HSLPEYQAREAAAAVATVAAGRSAEDVRDDP) are Extracellular-facing. Residues 271–293 (VLRRLEYFCIAWFSFEVSSRLLL) form a helical membrane-spanning segment. The Cytoplasmic segment spans residues 294–304 (APSTRNFFCHP). Residues 305–322 (LNLIDIVSVLPFYLTLLA) form a helical membrane-spanning segment. The Extracellular portion of the chain corresponds to 323 to 342 (SVALGGNNHGGTSGEELGHL). A helical; Voltage-sensor transmembrane segment spans residues 343-363 (GKVVQVFRLMRIFRVLKLARH). Over 364-378 (STGLRSLGATLKHSY) the chain is Cytoplasmic. A helical transmembrane segment spans residues 379-400 (REVGILLLYLAVGVSVFSGVAY). Over 401–413 (TAEKEEDVGFDTI) the chain is Extracellular. Residues 414–425 (PACWWWGTVSMT) constitute an intramembrane region (helical). Positions 426 to 431 (TVGYGD) match the Selectivity filter motif. An intramembrane segment occupies 426 to 433 (TVGYGDVV). At 434-440 (PVTLAGK) the chain is on the extracellular side. Residues 441–469 (LAASGCILGGILVVALPITIIFNKFSHFY) form a helical membrane-spanning segment. Residues 470-529 (QRQKALEAAVRNSGHREFEDLLSSVDGVSDASLETSRETSQEGRSADLEAPSESPKPQIY) lie on the Cytoplasmic side of the membrane. Residues 498 to 529 (SDASLETSRETSQEGRSADLEAPSESPKPQIY) are disordered. Residues 504-516 (TSRETSQEGRSAD) are compositionally biased toward basic and acidic residues.

Belongs to the potassium channel family. S (TC 1.A.1.2) subfamily. Kv9.1/KCNS1 sub-subfamily. In terms of assembly, heterotetramer with KCNB1. Heterotetramer with KCNB2. Does not form homomultimers.

Its subcellular location is the cell membrane. In terms of biological role, potassium channel regulatory subunit that modulate the delayed rectifier voltage-gated potassium channel activity of KCNB1 and KCNB2 by altering their kinetics, expression levels, and shifting the half-inactivation potential to more polarized values. While it does not form functional channels on its own, it can form functional heterotetrameric channels with KCNB1 and KCNB2. Each regulatory subunit has unique regulatory properties that can lead to extensive inhibition, significant changes in kinetics, and/or substantial shifts in the voltage dependencies of the inactivation process. This chain is Delayed-rectifier potassium channel regulatory subunit KCNS1, found in Lemur catta (Ring-tailed lemur).